A 278-amino-acid chain; its full sequence is MTDLNKHIKQAQTQRKQLLEESRELHREKLLVQAENRFFLEYLTNKTEEYTEQPEKVWNSYLQKSGEIERRRQESASRYAEQISVLKTALLQKENIQSSLKRKLQAMRDIAILKEKQEKEIQTLQEETKKVQAETASKTREVQAQLLQEKRLLEKQLSEPDRRLLGKRKRRELNMKAQALKLAAKRFIFEYSCGINRENQQFKKELLQLIEQAQKLTATQSHLENRKQQLQQEQWYLESLIQARQRLQGSHNQCLNRQDVPKTTPSLPQGTKSRINPK.

Coiled coils occupy residues 1–30 and 105–243; these read MTDL…REKL and QAMR…LIQA. The interval 253 to 278 is disordered; the sequence is QCLNRQDVPKTTPSLPQGTKSRINPK.

This is Coiled-coil domain-containing protein 121 (CCDC121) from Homo sapiens (Human).